The primary structure comprises 128 residues: Gene 39 protein (128 aa).

In Mycobacterium (Mycobacteriophage D29), this protein is Gene 39 protein (39).